The primary structure comprises 308 residues: Protein translocase subunit SecF (308 aa).

The next 6 membrane-spanning stretches (helical) occupy residues alanine 18–leucine 38, glycine 134–phenylalanine 154, leucine 160–leucine 180, threonine 193–phenylalanine 213, isoleucine 244–valine 264, and leucine 272–isoleucine 292.

Belongs to the SecD/SecF family. SecF subfamily. Forms a complex with SecD. Part of the essential Sec protein translocation apparatus which comprises SecA, SecYEG and auxiliary proteins SecDF. Other proteins may also be involved.

The protein resides in the cell inner membrane. Its function is as follows. Part of the Sec protein translocase complex. Interacts with the SecYEG preprotein conducting channel. SecDF uses the proton motive force (PMF) to complete protein translocation after the ATP-dependent function of SecA. The polypeptide is Protein translocase subunit SecF (Rhodothermus marinus (strain ATCC 43812 / DSM 4252 / R-10) (Rhodothermus obamensis)).